The chain runs to 135 residues: Membrane-anchored ubiquitin-fold protein 4 (135 aa).

The segment at 1-20 (MAEKEEGKVAAEGGAEAEAD) is disordered. The region spanning 23 to 92 (VEVKFRLFDG…NDKNIAQCRA (70 aa)) is the Ubiquitin-like domain. Cys-132 bears the Cysteine methyl ester mark. Cys-132 carries S-geranylgeranyl cysteine lipidation. Positions 133-135 (TIL) are cleaved as a propeptide — removed in mature form.

It is found in the cell membrane. May serve as docking site to facilitate the association of other proteins to the plasma membrane. This Oryza sativa subsp. japonica (Rice) protein is Membrane-anchored ubiquitin-fold protein 4 (MUB4).